Reading from the N-terminus, the 123-residue chain is Histone H2B.1, embryonic (123 aa).

The tract at residues 1–32 is disordered; the sequence is MAPTGQVAKKGSKKAVKPPRASGGKKRHRKRK. The segment covering 10 to 32 has biased composition (basic residues); sequence KGSKKAVKPPRASGGKKRHRKRK. The O-linked (GlcNAc) serine glycan is linked to Ser-110. Residue Lys-118 forms a Glycyl lysine isopeptide (Lys-Gly) (interchain with G-Cter in ubiquitin) linkage.

It belongs to the histone H2B family. As to quaternary structure, the nucleosome is a histone octamer containing two molecules each of H2A, H2B, H3 and H4 assembled in one H3-H4 heterotetramer and two H2A-H2B heterodimers. The octamer wraps approximately 147 bp of DNA. In terms of processing, monoubiquitination of Lys-118 gives a specific tag for epigenetic transcriptional activation and is also prerequisite for histone H3 'Lys-4' and 'Lys-79' methylation. Post-translationally, glcNAcylation at Ser-110 promotes monoubiquitination of Lys-118. It fluctuates in response to extracellular glucose, and associates with transcribed genes.

The protein resides in the nucleus. It localises to the chromosome. Core component of nucleosome. Nucleosomes wrap and compact DNA into chromatin, limiting DNA accessibility to the cellular machineries which require DNA as a template. Histones thereby play a central role in transcription regulation, DNA repair, DNA replication and chromosomal stability. DNA accessibility is regulated via a complex set of post-translational modifications of histones, also called histone code, and nucleosome remodeling. The protein is Histone H2B.1, embryonic of Psammechinus miliaris (Green sea urchin).